Consider the following 347-residue polypeptide: Phenylalanine--tRNA ligase alpha subunit (347 aa).

Position 265 (Glu-265) interacts with Mg(2+).

The protein belongs to the class-II aminoacyl-tRNA synthetase family. Phe-tRNA synthetase alpha subunit type 1 subfamily. In terms of assembly, tetramer of two alpha and two beta subunits. Mg(2+) serves as cofactor.

It is found in the cytoplasm. The enzyme catalyses tRNA(Phe) + L-phenylalanine + ATP = L-phenylalanyl-tRNA(Phe) + AMP + diphosphate + H(+). This is Phenylalanine--tRNA ligase alpha subunit from Mycolicibacterium vanbaalenii (strain DSM 7251 / JCM 13017 / BCRC 16820 / KCTC 9966 / NRRL B-24157 / PYR-1) (Mycobacterium vanbaalenii).